Here is a 92-residue protein sequence, read N- to C-terminus: Small ribosomal subunit protein uS19c (92 aa).

Belongs to the universal ribosomal protein uS19 family.

Its subcellular location is the plastid. It is found in the chloroplast. Protein S19 forms a complex with S13 that binds strongly to the 16S ribosomal RNA. In Nephroselmis olivacea (Green alga), this protein is Small ribosomal subunit protein uS19c.